A 293-amino-acid chain; its full sequence is Dehydrodolichyl diphosphate synthase complex subunit NUS1 (293 aa).

A run of 3 helical transmembrane segments spans residues 1–23 (MTGL…RTLT), 35–56 (WIWR…GFTL), and 117–135 (IASL…ISVY). N-linked (GlcNAc...) asparagine glycans are attached at residues asparagine 144 and asparagine 271. The RXG motif; crucial for prenyltransferase activity signature appears at 290–292 (RLG). 2 residues coordinate isopentenyl diphosphate: leucine 291 and glycine 292.

The protein belongs to the UPP synthase family. As to quaternary structure, the active dehydrodolichyl diphosphate synthase complex is a heterotetramer composed of a dimer of heterodimer of DHDDS and NUS1. Interacts with NPC2. It depends on Mg(2+) as a cofactor.

The protein localises to the endoplasmic reticulum membrane. The catalysed reaction is n isopentenyl diphosphate + (2E,6E)-farnesyl diphosphate = a di-trans,poly-cis-polyprenyl diphosphate + n diphosphate. Its pathway is protein modification; protein glycosylation. It functions in the pathway lipid metabolism. Activated by phospholipids including cardiolipin, phosphatidylcholine, phosphatidylethanolamine, phosphatidylinositol and phosphatidylserine. With DHDDS, forms the dehydrodolichyl diphosphate synthase (DDS) complex, an essential component of the dolichol monophosphate (Dol-P) biosynthetic machinery. Both subunits contribute to enzymatic activity, i.e. condensation of multiple copies of isopentenyl pyrophosphate (IPP) to farnesyl pyrophosphate (FPP) to produce dehydrodolichyl diphosphate (Dedol-PP), a precursor of dolichol phosphate which is utilized as a sugar carrier in protein glycosylation in the endoplasmic reticulum (ER). Synthesizes long-chain polyprenols, mostly of C95 and C100 chain length. Regulates the glycosylation and stability of nascent NPC2, thereby promoting trafficking of LDL-derived cholesterol. Acts as a specific receptor for the N-terminus of Nogo-B, a neural and cardiovascular regulator. This Homo sapiens (Human) protein is Dehydrodolichyl diphosphate synthase complex subunit NUS1.